Consider the following 154-residue polypeptide: uncharacterized protein (154 aa).

The protein resides in the mitochondrion. This is an uncharacterized protein from Arabidopsis thaliana (Mouse-ear cress).